A 117-amino-acid polypeptide reads, in one-letter code: Large ribosomal subunit protein bL20c (117 aa).

Belongs to the bacterial ribosomal protein bL20 family.

Its subcellular location is the plastid. The protein resides in the chloroplast. Its function is as follows. Binds directly to 23S ribosomal RNA and is necessary for the in vitro assembly process of the 50S ribosomal subunit. It is not involved in the protein synthesizing functions of that subunit. This chain is Large ribosomal subunit protein bL20c (rpl20), found in Bigelowiella natans (Pedinomonas minutissima).